The following is a 321-amino-acid chain: uncharacterized protein (321 aa).

It belongs to the carbohydrate kinase PfkB family.

This is an uncharacterized protein from Escherichia coli (strain K12).